A 109-amino-acid chain; its full sequence is Prothymosin alpha (109 aa).

Positions 1-109 (MSDTSVDASV…AKKQKTDDDD (109 aa)) are disordered. Over residues 9 to 35 (SVEKTTKDLKSKDKELVEETENGKDKP) the composition is skewed to basic and acidic residues. The span at 41–81 (ENEENGEDGADNEEEEEVDEEDEEDEGEGDDDEGDEDDEAD) shows a compositional bias: acidic residues. Residues 99–109 (DAKKQKTDDDD) are compositionally biased toward basic and acidic residues.

It belongs to the pro/parathymosin family. As to expression, highly expressed in the testis.

The protein resides in the nucleus. Functionally, may have role in testicular activity. The protein is Prothymosin alpha of Pelophylax lessonae (Pool frog).